The sequence spans 371 residues: Histidinol-phosphate aminotransferase 2 (371 aa).

Lys-232 is modified (N6-(pyridoxal phosphate)lysine).

Belongs to the class-II pyridoxal-phosphate-dependent aminotransferase family. Histidinol-phosphate aminotransferase subfamily. Homodimer. Requires pyridoxal 5'-phosphate as cofactor.

The catalysed reaction is L-histidinol phosphate + 2-oxoglutarate = 3-(imidazol-4-yl)-2-oxopropyl phosphate + L-glutamate. Its pathway is amino-acid biosynthesis; L-histidine biosynthesis; L-histidine from 5-phospho-alpha-D-ribose 1-diphosphate: step 7/9. The protein is Histidinol-phosphate aminotransferase 2 of Methylococcus capsulatus (strain ATCC 33009 / NCIMB 11132 / Bath).